We begin with the raw amino-acid sequence, 237 residues long: Ribonuclease PH (237 aa).

Phosphate-binding positions include Arg86 and 124 to 126 (GTR).

This sequence belongs to the RNase PH family. In terms of assembly, homohexameric ring arranged as a trimer of dimers.

The enzyme catalyses tRNA(n+1) + phosphate = tRNA(n) + a ribonucleoside 5'-diphosphate. Its function is as follows. Phosphorolytic 3'-5' exoribonuclease that plays an important role in tRNA 3'-end maturation. Removes nucleotide residues following the 3'-CCA terminus of tRNAs; can also add nucleotides to the ends of RNA molecules by using nucleoside diphosphates as substrates, but this may not be physiologically important. Probably plays a role in initiation of 16S rRNA degradation (leading to ribosome degradation) during starvation. This Bradyrhizobium diazoefficiens (strain JCM 10833 / BCRC 13528 / IAM 13628 / NBRC 14792 / USDA 110) protein is Ribonuclease PH.